The primary structure comprises 539 residues: Chaperonin GroEL 1 (539 aa).

ATP contacts are provided by residues 30 to 33 (TLGP), Lys-51, 87 to 91 (DGTTT), Gly-415, 480 to 482 (NAA), and Asp-496.

It belongs to the chaperonin (HSP60) family. As to quaternary structure, forms a cylinder of 14 subunits composed of two heptameric rings stacked back-to-back. Interacts with the co-chaperonin GroES.

It is found in the cytoplasm. The enzyme catalyses ATP + H2O + a folded polypeptide = ADP + phosphate + an unfolded polypeptide.. Functionally, together with its co-chaperonin GroES, plays an essential role in assisting protein folding. The GroEL-GroES system forms a nano-cage that allows encapsulation of the non-native substrate proteins and provides a physical environment optimized to promote and accelerate protein folding. The chain is Chaperonin GroEL 1 from Bradyrhizobium sp. (strain ORS 278).